Consider the following 345-residue polypeptide: Methylthioribose-1-phosphate isomerase (345 aa).

Residues 47–49 (RGA), Arg90, and Gln199 each bind substrate. The Proton donor role is filled by Asp240. 250–251 (NK) lines the substrate pocket.

It belongs to the eIF-2B alpha/beta/delta subunits family. MtnA subfamily.

It catalyses the reaction 5-(methylsulfanyl)-alpha-D-ribose 1-phosphate = 5-(methylsulfanyl)-D-ribulose 1-phosphate. The protein operates within amino-acid biosynthesis; L-methionine biosynthesis via salvage pathway; L-methionine from S-methyl-5-thio-alpha-D-ribose 1-phosphate: step 1/6. Catalyzes the interconversion of methylthioribose-1-phosphate (MTR-1-P) into methylthioribulose-1-phosphate (MTRu-1-P). The polypeptide is Methylthioribose-1-phosphate isomerase (Crocosphaera subtropica (strain ATCC 51142 / BH68) (Cyanothece sp. (strain ATCC 51142))).